A 255-amino-acid chain; its full sequence is Epoxyqueuosine reductase QueH (255 aa).

[4Fe-4S] cluster contacts are provided by Cys44, Cys45, Cys128, and Cys131. The cysteines at positions 210 and 212 are disulfide-linked.

The protein belongs to the QueH family.

It catalyses the reaction epoxyqueuosine(34) in tRNA + AH2 = queuosine(34) in tRNA + A + H2O. It participates in tRNA modification; tRNA-queuosine biosynthesis. In terms of biological role, catalyzes the conversion of epoxyqueuosine (oQ) to queuosine (Q), which is a hypermodified base found in the wobble positions of tRNA(Asp), tRNA(Asn), tRNA(His) and tRNA(Tyr). The protein is Epoxyqueuosine reductase QueH of Streptococcus pyogenes serotype M1.